A 60-amino-acid chain; its full sequence is uncharacterized protein (60 aa).

The helical transmembrane segment at 38 to 58 (SILAGGIIPVLFFFPLFLFLY) threads the bilayer.

It localises to the membrane. This is an uncharacterized protein from Saccharomyces cerevisiae (strain ATCC 204508 / S288c) (Baker's yeast).